The chain runs to 356 residues: Cell division control protein 10 (356 aa).

The 251-residue stretch at 36-286 folds into the Septin-type G domain; that stretch reads KGFELNVLVV…NNYRKKIFEI (251 aa). Positions 46–53 are G1 motif; that stretch reads GRRGLGTS. Residues 46–53 and Thr70 contribute to the GTP site; that span reads GRRGLGTS. Positions 93–96 are G3 motif; that stretch reads TYHE. The segment at 163-166 is G4 motif; that stretch reads PKAD. GTP contacts are provided by residues 164–172 and Arg235; that span reads KADMYTPDE.

The protein belongs to the TRAFAC class TrmE-Era-EngA-EngB-Septin-like GTPase superfamily. Septin GTPase family. In terms of assembly, component of the septin complex.

In terms of biological role, septins are GTPases involved in cytokinesis. The septins localize to the site of cleavage and act as a structural scaffold that recruits different components involved in diverse processes at specific stages during the cell cycle. Septins are also involved in cell morphogenesis, chitin deposition, cell cycle regulation, cell compartmentalization and spore wall formation. This chain is Cell division control protein 10 (CDC10), found in Encephalitozoon cuniculi (strain GB-M1) (Microsporidian parasite).